The following is a 69-amino-acid chain: Bowman-Birk type proteinase inhibitor A2 (69 aa).

4 disulfide bridges follow: C12–C31, C18–C29, C38–C45, and C42–C59.

The protein belongs to the Bowman-Birk serine protease inhibitor family. As to expression, expressed in bulb (at protein level).

Its function is as follows. Serine protease inhibitor. This is Bowman-Birk type proteinase inhibitor A2 from Hyacinthus orientalis (Common hyacinth).